Consider the following 512-residue polypeptide: Maturase K (512 aa).

The protein belongs to the intron maturase 2 family. MatK subfamily.

It is found in the plastid. Its subcellular location is the chloroplast. Its function is as follows. Usually encoded in the trnK tRNA gene intron. Probably assists in splicing its own and other chloroplast group II introns. The protein is Maturase K of Lilium tsingtauense (Twilight lily).